The sequence spans 587 residues: Protein IQ-DOMAIN 31 (587 aa).

The segment at 57-80 (ETNTVDRSGGMLETQNVGPEEISD) is disordered. A Phosphoserine modification is found at S79. IQ domains are found at residues 112–140 (REIAATSVQAAFRGYLARRAFWALKGIIR), 141–163 (LQALIRGHLVRRQAVATLFSVMG), and 164–188 (IVRLQAFARGREIRKSDIGVQVYRK). Residues 149–159 (LVRRQAVATLF) form a calmodulin-binding region. The Nuclear localization signal motif lies at 176–183 (IRKSDIGV). The interval 344–587 (NPVVESSIQP…AKTTPAERKR (244 aa)) is disordered. Basic and acidic residues-rich tracts occupy residues 357 to 373 (PRKEVEKPKLGVEKTRE) and 390 to 413 (CDEKKKQEISEQPEEEVHALEMEV). Positions 424 to 434 (ALDSSLVNQID) are enriched in polar residues. Basic and acidic residues-rich tracts occupy residues 435-472 (SNEKAMVEEKPSMEKDTKEEKTPKPNNKENSAGKENQK) and 482-494 (KTEREESNGHHET). Composition is skewed to polar residues over residues 495 to 506 (SPSIPSYMQATK) and 544 to 561 (RITSHSPRTTRLANSGDK).

Belongs to the IQD family. As to quaternary structure, binds to multiple calmodulin (CaM) in the presence of Ca(2+) and CaM-like proteins.

It is found in the nucleus. Its subcellular location is the nucleus envelope. It localises to the cytoplasm. The protein localises to the cytoskeleton. The protein resides in the cell membrane. Its function is as follows. May be involved in cooperative interactions with calmodulins or calmodulin-like proteins. Recruits calmodulin proteins to microtubules, thus being a potential scaffold in cellular signaling and trafficking. May associate with nucleic acids and regulate gene expression at the transcriptional or post-transcriptional level. The protein is Protein IQ-DOMAIN 31 of Arabidopsis thaliana (Mouse-ear cress).